A 257-amino-acid polypeptide reads, in one-letter code: NAD-capped RNA hydrolase NudC (257 aa).

Substrate is bound by residues K25 and R69. 2 residues coordinate Zn(2+): C98 and C101. Substrate is bound at residue E111. C116 and C119 together coordinate Zn(2+). Residue Y124 participates in substrate binding. One can recognise a Nudix hydrolase domain in the interval 125-248 (PQIAPCIIVA…TVARRLIEDT (124 aa)). Residues A158, E174, and E178 each coordinate a divalent metal cation. The Nudix box signature appears at 159–180 (GFVEVGETLEQAVAREVMEESG). Substrate is bound at residue 192-199 (QPWPFPQS). E219 serves as a coordination point for a divalent metal cation. A241 lines the substrate pocket.

It belongs to the Nudix hydrolase family. NudC subfamily. As to quaternary structure, homodimer. Mg(2+) serves as cofactor. Requires Mn(2+) as cofactor. The cofactor is Zn(2+).

It carries out the reaction a 5'-end NAD(+)-phospho-ribonucleoside in mRNA + H2O = a 5'-end phospho-adenosine-phospho-ribonucleoside in mRNA + beta-nicotinamide D-ribonucleotide + 2 H(+). The enzyme catalyses NAD(+) + H2O = beta-nicotinamide D-ribonucleotide + AMP + 2 H(+). The catalysed reaction is NADH + H2O = reduced beta-nicotinamide D-ribonucleotide + AMP + 2 H(+). In terms of biological role, mRNA decapping enzyme that specifically removes the nicotinamide adenine dinucleotide (NAD) cap from a subset of mRNAs by hydrolyzing the diphosphate linkage to produce nicotinamide mononucleotide (NMN) and 5' monophosphate mRNA. The NAD-cap is present at the 5'-end of some mRNAs and stabilizes RNA against 5'-processing. Has preference for mRNAs with a 5'-end purine. Catalyzes the hydrolysis of a broad range of dinucleotide pyrophosphates. The sequence is that of NAD-capped RNA hydrolase NudC from Shigella flexneri serotype 5b (strain 8401).